The primary structure comprises 512 residues: Cytochrome P450 26B1 (512 aa).

Residue C441 participates in heme binding.

This sequence belongs to the cytochrome P450 family. Heme serves as cofactor.

It localises to the endoplasmic reticulum membrane. The protein localises to the microsome membrane. The catalysed reaction is all-trans-retinoate + reduced [NADPH--hemoprotein reductase] + O2 = all-trans-4-hydroxyretinoate + oxidized [NADPH--hemoprotein reductase] + H2O + H(+). It catalyses the reaction all-trans-retinoate + reduced [NADPH--hemoprotein reductase] + O2 = all-trans-18-hydroxyretinoate + oxidized [NADPH--hemoprotein reductase] + H2O + H(+). A cytochrome P450 monooxygenase involved in the metabolism of retinoates (RAs), the active metabolites of vitamin A, and critical signaling molecules in animals. RAs exist as at least four different isomers: all-trans-RA (atRA), 9-cis-RA, 13-cis-RA, and 9,13-dicis-RA, where atRA is considered to be the biologically active isomer, although 9-cis-RA and 13-cis-RA also have activity. Catalyzes the hydroxylation of atRA primarily at C-4 and C-18, thereby contributing to the regulation of atRA homeostasis and signaling. Hydroxylation of atRA limits its biological activity and initiates a degradative process leading to its eventual elimination. Involved in the convertion of atRA to all-trans-4-oxo-RA. Can oxidize all-trans-13,14-dihydroretinoate (DRA) to metabolites which could include all-trans-4-oxo-DRA, all-trans-4-hydroxy-DRA, all-trans-5,8-epoxy-DRA, and all-trans-18-hydroxy-DRA. Shows preference for the following substrates: atRA &gt; 9-cis-RA &gt; 13-cis-RA. Plays a central role in germ cell development: acts by degrading RAs in the developing testis, preventing STRA8 expression, thereby leading to delay of meiosis. Required for the maintenance of the undifferentiated state of male germ cells during embryonic development in Sertoli cells, inducing arrest in G0 phase of the cell cycle and preventing meiotic entry. Plays a role in skeletal development, both at the level of patterning and in the ossification of bone and the establishment of some synovial joints. Essential for postnatal survival. In terms of biological role, also has a significant activity in oxidation of tazarotenic acid and may therefore metabolize that xenobiotic in vivo. This Rattus norvegicus (Rat) protein is Cytochrome P450 26B1 (Cyp26b1).